The sequence spans 189 residues: Ornithine decarboxylase antizyme 2 (189 aa).

The residue at position 186 (S186) is a Phosphoserine.

The protein belongs to the ODC antizyme family. In terms of assembly, interacts with ODC1 and thereby sterically blocks ODC homodimerization. Interacts with AZIN2; this interaction disrupts the interaction between the antizyme and ODC1.

The protein resides in the nucleus. Ornithine decarboxylase (ODC) antizyme protein that negatively regulates ODC activity and intracellular polyamine biosynthesis and uptake in response to increased intracellular polyamine levels. Binds to ODC monomers, inhibiting the assembly of the functional ODC homodimers. Does not target the ODC monomers for degradation, which allows a protein synthesis-independent restoration of ODC activity. Involved in the translocation of AZIN2 from ER-Golgi intermediate compartment (ERGIC) to the cytosol. The protein is Ornithine decarboxylase antizyme 2 (Oaz2) of Mus musculus (Mouse).